A 61-amino-acid polypeptide reads, in one-letter code: Toxin S5C1 (61 aa).

Cystine bridges form between C3-C22, C16-C39, C41-C53, and C54-C59. A Cell attachment site motif is present at residues 45–47 (RGD).

Belongs to the three-finger toxin family. Short-chain subfamily. Antiplatelet toxin sub-subfamily. As to expression, expressed by the venom gland.

The protein localises to the secreted. Functionally, inhibits ADP-induced platelet aggregation and inhibits the binding of purified platelet fibrinogen receptor alpha-IIb/beta-3 (ITGA2B/ITGB3) to immobilized fibrinogen. The sequence is that of Toxin S5C1 from Dendroaspis jamesoni kaimosae (Eastern Jameson's mamba).